A 452-amino-acid chain; its full sequence is Phosphoglucosamine mutase (452 aa).

The Phosphoserine intermediate role is filled by Ser108. Residues Ser108, Asp247, Asp249, and Asp251 each contribute to the Mg(2+) site. Position 108 is a phosphoserine (Ser108).

This sequence belongs to the phosphohexose mutase family. The cofactor is Mg(2+). Post-translationally, activated by phosphorylation.

The catalysed reaction is alpha-D-glucosamine 1-phosphate = D-glucosamine 6-phosphate. Its function is as follows. Catalyzes the conversion of glucosamine-6-phosphate to glucosamine-1-phosphate. The chain is Phosphoglucosamine mutase from Burkholderia thailandensis (strain ATCC 700388 / DSM 13276 / CCUG 48851 / CIP 106301 / E264).